We begin with the raw amino-acid sequence, 171 residues long: Large ribosomal subunit protein uL10 (171 aa).

It belongs to the universal ribosomal protein uL10 family. As to quaternary structure, part of the ribosomal stalk of the 50S ribosomal subunit. The N-terminus interacts with L11 and the large rRNA to form the base of the stalk. The C-terminus forms an elongated spine to which L12 dimers bind in a sequential fashion forming a multimeric L10(L12)X complex.

In terms of biological role, forms part of the ribosomal stalk, playing a central role in the interaction of the ribosome with GTP-bound translation factors. This is Large ribosomal subunit protein uL10 from Cereibacter sphaeroides (strain ATCC 17023 / DSM 158 / JCM 6121 / CCUG 31486 / LMG 2827 / NBRC 12203 / NCIMB 8253 / ATH 2.4.1.) (Rhodobacter sphaeroides).